The sequence spans 475 residues: Transmembrane protein 44 (475 aa).

The Extracellular portion of the chain corresponds to 1–29 (MGEAPSPAPALWDWDYLDRCFARHRVCIS). Residues 30–50 (FGLWICASSCWIAAHALLLYL) form a helical membrane-spanning segment. The Cytoplasmic segment spans residues 51 to 61 (RCAQKPRQDQS). A helical membrane pass occupies residues 62–82 (ALCAACCLLTSLCDTVGALLA). At 83–88 (RQLTIQ) the chain is on the extracellular side. Residues 89–109 (VFTGAYLAAIDLVNFMFILFP) form a helical membrane-spanning segment. Over 110-135 (VCGSKFKSNSDREARERKRRRQLRAS) the chain is Cytoplasmic. A helical membrane pass occupies residues 136 to 156 (VFALALPLSLGPCWALWVAVP). Residues 157-179 (KASATIRGPQRRLLASLLQENTE) are Extracellular-facing. Residues 180-200 (ILGYLLGSVAAFGSWASRIPP) form a helical membrane-spanning segment. The Cytoplasmic portion of the chain corresponds to 201-259 (LSRIAPPPTLGITTQHEIWRGQMSKPSQSPSRSPSGHWRAAAQRQVLGTEMCRGKTFPS). The helical transmembrane segment at 260-280 (IHLWTRLLSALAGLLYASAIV) threads the bilayer. Topologically, residues 281–294 (AHDQHPEYLLRATP) are extracellular. Residues 295–315 (WFLTSLGRAALDLAIIFLSCV) form a helical membrane-spanning segment. Residues 316-475 (MKSKMRQALG…VRTAHLSDDD (160 aa)) are Cytoplasmic-facing. Positions 390 to 475 (SATRLPGDGQ…VRTAHLSDDD (86 aa)) are disordered. Over residues 424 to 436 (SSGSSSEVSSINS) the composition is skewed to low complexity. Positions 464–475 (DSVRTAHLSDDD) are enriched in basic and acidic residues. A Phosphoserine modification is found at Ser465.

The protein localises to the membrane. This is Transmembrane protein 44 (TMEM44) from Homo sapiens (Human).